Consider the following 231-residue polypeptide: Octanoyltransferase (231 aa).

The BPL/LPL catalytic domain maps to 49 to 224; the sequence is ADTPDEIWLL…ALQRLLPPVY (176 aa). Residues 88–95, 155–157, and 168–170 each bind substrate; these read RGGQITYH, ALG, and GLA. Cys-186 (acyl-thioester intermediate) is an active-site residue.

The protein belongs to the LipB family.

Its subcellular location is the cytoplasm. The catalysed reaction is octanoyl-[ACP] + L-lysyl-[protein] = N(6)-octanoyl-L-lysyl-[protein] + holo-[ACP] + H(+). It functions in the pathway protein modification; protein lipoylation via endogenous pathway; protein N(6)-(lipoyl)lysine from octanoyl-[acyl-carrier-protein]: step 1/2. Functionally, catalyzes the transfer of endogenously produced octanoic acid from octanoyl-acyl-carrier-protein onto the lipoyl domains of lipoate-dependent enzymes. Lipoyl-ACP can also act as a substrate although octanoyl-ACP is likely to be the physiological substrate. The polypeptide is Octanoyltransferase (Aromatoleum aromaticum (strain DSM 19018 / LMG 30748 / EbN1) (Azoarcus sp. (strain EbN1))).